Here is a 417-residue protein sequence, read N- to C-terminus: Methyltransferase/ribosomally synthesized cyclic peptide dendrothelin A precursor dbihMA (417 aa).

The segment at Met1 to Lys251 is methyltransferase domain. Active-site residues include Arg72, Tyr76, and Tyr98. Residues Tyr98, His100, Val103, Ala130, Gln172, Ala213, Ser244, and Thr245 each contribute to the S-adenosyl-L-methionine site. Residues Ala252–Met378 form a clasp domain region. Positions Pro379–Pro399 are precursor leader. N-methylvaline is present on residues Val401 and Val403. Residue Thr404 is modified to N-methylthreonine. Gly405 carries the post-translational modification N-methylglycine. N-methylisoleucine is present on Ile406. An N-methylvaline modification is found at Val407. The residue at position 408 (Gly408) is an N-methylglycine. Ile410 is modified (N-methylisoleucine). The residue at position 411 (Gly411) is an N-methylglycine. N-methylvaline is present on Val413.

This sequence in the N-terminal section; belongs to the precorrin methyltransferase family. Homodimer. Post-translationally, dbiMA automethylates at Val-401, Val-403, Thr-404, Gly-405, Ile-406, Val-407, Gly-408, Ile-410, Gly-411 and Val-413 before being processed by the prolyloligopeptidase dbiP which likely forms a peptidyl ester upon removal of the follower propeptide, which then undergoes macrocyclization with the N-terminus of the modified core peptide. Peptide backbone alpha-N-methylations change the physicochemical properties of amide bonds to provide structural constraints and other favorable characteristics including biological membrane permeability to peptides.

Its pathway is mycotoxin biosynthesis. In terms of biological role, fusion protein of the methyltransferase dbiM and the dendrothelin core peptide; part of the gene cluster that mediates the biosynthesis of dendrothelin A, a highly methylated cyclic dodecapeptide showing slight nematodicidal activity. Dendrothelin A derives from the C-terminus of the dbiMA protein, and it is the dbiMA protein that methylates its own C-terminus using S-adenosyl methionine (SAM). The C-terminus is subsequently cleaved off and macrocyclized by the prolyloligopeptidase dbiP to give the final product. This Dendrothele bispora (strain CBS 962.96) protein is Methyltransferase/ribosomally synthesized cyclic peptide dendrothelin A precursor dbihMA.